The following is a 147-amino-acid chain: Ponticulin-like protein C5 (147 aa).

The signal sequence occupies residues 1–20 (MKLNNSLLLLIVAIIASSNA). A lipid anchor (GPI-like-anchor amidated asparagine) is attached at Asn-118. Residue Asn-118 is glycosylated (N-linked (GlcNAc...) asparagine). A propeptide spans 119 to 147 (SSESDSSDSTRIGASFALFALALLSMLAL) (removed in mature form).

Belongs to the ponticulin family. Post-translationally, the GPI-like-anchor contains a phosphoceramide group, rather than a phosphatidyl group.

The protein localises to the cell membrane. This chain is Ponticulin-like protein C5 (ponC5), found in Dictyostelium discoideum (Social amoeba).